The following is a 154-amino-acid chain: Large-conductance mechanosensitive channel (154 aa).

Helical transmembrane passes span 14–34 and 86–106; these read VVDL…VNSL and VFIN…FFVV.

Belongs to the MscL family. Homopentamer.

Its subcellular location is the cell membrane. Functionally, channel that opens in response to stretch forces in the membrane lipid bilayer. May participate in the regulation of osmotic pressure changes within the cell. The protein is Large-conductance mechanosensitive channel of Dehalococcoides mccartyi (strain CBDB1).